The chain runs to 275 residues: Large ribosomal subunit protein uL2 (275 aa).

A disordered region spans residues 224 to 275 (AMNPVDHPHGGGEAKAGQGNPHPVTPWGVPTKGYKTRKNKRTQQFIVRDRRG).

The protein belongs to the universal ribosomal protein uL2 family. Part of the 50S ribosomal subunit. Forms a bridge to the 30S subunit in the 70S ribosome.

In terms of biological role, one of the primary rRNA binding proteins. Required for association of the 30S and 50S subunits to form the 70S ribosome, for tRNA binding and peptide bond formation. It has been suggested to have peptidyltransferase activity; this is somewhat controversial. Makes several contacts with the 16S rRNA in the 70S ribosome. This chain is Large ribosomal subunit protein uL2, found in Xanthomonas oryzae pv. oryzae (strain MAFF 311018).